Here is a 782-residue protein sequence, read N- to C-terminus: E3 ubiquitin-protein ligase SopA (782 aa).

Residues 137-171 (VSVSANNRPTVSEGRTPPVSPSLSLQATSSPSSPA) are disordered. The span at 157-171 (PSLSLQATSSPSSPA) shows a compositional bias: low complexity. Residue Cys753 is the Glycyl thioester intermediate of the active site.

This sequence belongs to the SopA E3 ligase family. Ubiquitinated in the presence of host E1 ubiquitin-activating enzyme, E2 ubiquitin-conjugating enzyme and ubiquitin.

It localises to the secreted. The protein resides in the host cell. The enzyme catalyses S-ubiquitinyl-[E2 ubiquitin-conjugating enzyme]-L-cysteine + [acceptor protein]-L-lysine = [E2 ubiquitin-conjugating enzyme]-L-cysteine + N(6)-ubiquitinyl-[acceptor protein]-L-lysine.. In terms of biological role, effector proteins function to alter host cell physiology and promote bacterial survival in host tissues. This protein is an E3 ubiquitin ligase that interferes with host's ubiquitination pathway. The sequence is that of E3 ubiquitin-protein ligase SopA (sopA) from Salmonella dublin (strain CT_02021853).